A 275-amino-acid chain; its full sequence is NH(3)-dependent NAD(+) synthetase (275 aa).

Residue 46 to 53 (GISGGQDS) coordinates ATP. A Mg(2+)-binding site is contributed by Asp52. Arg140 is a binding site for deamido-NAD(+). Thr160 provides a ligand contact to ATP. Glu165 is a Mg(2+) binding site. Deamido-NAD(+) is bound by residues Lys173 and Asp180. Lys189 and Thr211 together coordinate ATP. 260–261 (HK) serves as a coordination point for deamido-NAD(+).

The protein belongs to the NAD synthetase family. As to quaternary structure, homodimer.

The enzyme catalyses deamido-NAD(+) + NH4(+) + ATP = AMP + diphosphate + NAD(+) + H(+). The protein operates within cofactor biosynthesis; NAD(+) biosynthesis; NAD(+) from deamido-NAD(+) (ammonia route): step 1/1. Its function is as follows. Catalyzes the ATP-dependent amidation of deamido-NAD to form NAD. Uses ammonia as a nitrogen source. In Escherichia coli O6:K15:H31 (strain 536 / UPEC), this protein is NH(3)-dependent NAD(+) synthetase.